Here is a 458-residue protein sequence, read N- to C-terminus: F-box/FBD/LRR-repeat protein At1g78750 (458 aa).

The F-box domain occupies 17-67; the sequence is VDWISNLPETLLCQVLFYLPTKDVVKSSVLSSRWRNLWKYVPGFNLSYCDF. LRR repeat units follow at residues 152–183, 184–209, 231–258, 302–327, and 345–370; these read CETLVYLTLDGLSLASPKFVSLPSLKELHLSI, VKFADHMALETLISQCPVLENLNINR, VADTDEMLNEDLVVAIDAPKLKYLRLSD, DFLVGISSIKTLIIASSTLEVIYDYS, and FYGYKWEMLPIFLESCPNLKSLVVGS. One can recognise an FBD domain in the interval 376–428; it reads KEGINILSVPRGFLSSLEYVKIERPLKGEAMEMKLVSYLLENSTILKKLTLCL.

In Arabidopsis thaliana (Mouse-ear cress), this protein is F-box/FBD/LRR-repeat protein At1g78750.